The following is a 300-amino-acid chain: Movement protein (300 aa).

Belongs to the alfamovirus movement protein family.

The protein resides in the host cell junction. The protein localises to the host plasmodesma. Functionally, transports viral genome to neighboring plant cells directly through plasmosdesmata, without any budding. The movement protein allows efficient cell to cell propagation, by bypassing the host cell wall barrier. Acts by forming a tubular structure at the host plasmodesmata, enlarging it enough to allow free passage of virion capsids. In Alfalfa mosaic virus (AMV), this protein is Movement protein.